The sequence spans 308 residues: MTSDDTVWPGAGRSIETLAALSPGQAEAVLALLDEAARVDGQPAVSEQGRLQLRGGEREGVRHLLLSAGDTLVGYAQLEDTDPVEAPAAELVVHPAHRGRGHGRALGTALLAATGKRLRAWAHGGHSAARHLAQVLGLTLFRELRQMRRPLAGLDLAEPKLPDGVTVRAFVPGQDDAAWLAVNAAAFAHHPEQGSLTQRDLDDRKAEPWFDPAGFFLAERDGELIGFHWTKVHAQEGIGEVYVLGVRPGAQGGGLGKALTTIGLRHLEAQGLPTAMLYVDADNKAAVSVYERLGFATHETDLMYRTES.

N-acetyltransferase domains lie at 16–152 (ETLA…RPLA) and 165–308 (VTVR…RTES). A 1D-myo-inositol 2-(L-cysteinylamino)-2-deoxy-alpha-D-glucopyranoside-binding site is contributed by Glu47. Residue 91–93 (LVV) participates in acetyl-CoA binding. 3 residues coordinate 1D-myo-inositol 2-(L-cysteinylamino)-2-deoxy-alpha-D-glucopyranoside: Glu192, Lys231, and Glu240. Acetyl-CoA-binding positions include 244-246 (LGV) and 251-257 (QGGGLGK). Residue Tyr278 participates in 1D-myo-inositol 2-(L-cysteinylamino)-2-deoxy-alpha-D-glucopyranoside binding.

The protein belongs to the acetyltransferase family. MshD subfamily. Monomer.

It carries out the reaction 1D-myo-inositol 2-(L-cysteinylamino)-2-deoxy-alpha-D-glucopyranoside + acetyl-CoA = mycothiol + CoA + H(+). Catalyzes the transfer of acetyl from acetyl-CoA to desacetylmycothiol (Cys-GlcN-Ins) to form mycothiol. The chain is Mycothiol acetyltransferase from Streptomyces avermitilis (strain ATCC 31267 / DSM 46492 / JCM 5070 / NBRC 14893 / NCIMB 12804 / NRRL 8165 / MA-4680).